We begin with the raw amino-acid sequence, 328 residues long: MERIIQQTDYDALSCKLAAISVGYLPSSGLQRLSVDLSKKYTEWHRSYLITLKKFSRRAFGKVDKAMRSSFPVMNYGTYLRTVGIDAAILEFLVANEKVQVVNLGCGSDLRMLPLLQMFPHLAYVDIDYNESVELKNSILRESEILRISLGLSKEDTAKSPFLIDQGRYKLAACDLNDITETTRLLDVCTKREIPTIVISECLLCYMHNNESQLLINTIMSKFSHGLWISYDPIGGSQPNDRFGAIMQSNLKESRNLEMPTLMTYNSKEKYASRWSAAPNVIVNDMWEIFNAQIPESERKRLRSLQFLDELEELKVMQTHYILMKAQW.

S-adenosyl-L-methionine is bound by residues arginine 81, glycine 105, aspartate 128, 175–177 (DLN), and glutamate 201.

It belongs to the methyltransferase superfamily. LCMT family.

It carries out the reaction [phosphatase 2A protein]-C-terminal L-leucine + S-adenosyl-L-methionine = [phosphatase 2A protein]-C-terminal L-leucine methyl ester + S-adenosyl-L-homocysteine. Inhibited by S-adenosyl-L-homocysteine. In terms of biological role, methylates the carboxyl group of the C-terminal leucine residue of protein phosphatase 2A catalytic subunits to form alpha-leucine ester residues. Acts on the two major protein phosphatase 2A catalytic subunits, PPH21 and PPH22. This chain is Leucine carboxyl methyltransferase 1 (PPM1), found in Saccharomyces cerevisiae (strain ATCC 204508 / S288c) (Baker's yeast).